Here is a 670-residue protein sequence, read N- to C-terminus: DNA mismatch repair protein MutL (670 aa).

The disordered stretch occupies residues serine 363–histidine 451. Residues glutamate 379–alanine 389 show a composition bias toward basic and acidic residues.

It belongs to the DNA mismatch repair MutL/HexB family.

This protein is involved in the repair of mismatches in DNA. It is required for dam-dependent methyl-directed DNA mismatch repair. May act as a 'molecular matchmaker', a protein that promotes the formation of a stable complex between two or more DNA-binding proteins in an ATP-dependent manner without itself being part of a final effector complex. This is DNA mismatch repair protein MutL from Syntrophobacter fumaroxidans (strain DSM 10017 / MPOB).